The following is a 398-amino-acid chain: Nematocin receptor 2 (398 aa).

Residues 1–25 lie on the Extracellular side of the membrane; sequence MNNNTLNITNQRTAAAMSQIYFLVV. Residues N3 and N7 are each glycosylated (N-linked (GlcNAc...) asparagine). Residues 26–46 traverse the membrane as a helical segment; that stretch reads YQTAVMIVSLLGNLFLLFVIF. Topologically, residues 47-58 are cytoplasmic; that stretch reads RANQVMKRRVSP. A helical transmembrane segment spans residues 59–79; it reads VQLLIIHTCVADLLFALLSLG. The Extracellular segment spans residues 80-99; that stretch reads TEILTLRTYPQYYGSNFVCK. A disulfide bridge links C98 with C173. Residues 100 to 120 form a helical membrane-spanning segment; it reads LMRYVQMFPMYASPFLLVAIS. Residues 121–143 lie on the Cytoplasmic side of the membrane; the sequence is ADRYQAICRPLAHFRSSRYRRPN. A helical transmembrane segment spans residues 144–164; sequence WMAAIAWGLALVLSIPQFFVW. The Extracellular segment spans residues 165 to 187; sequence TKHSKTGRCSTIYGQNKNTVKIT. A helical transmembrane segment spans residues 188-208; that stretch reads YVIMFNTLAWLLPSILAAVFY. The Cytoplasmic portion of the chain corresponds to 209–271; it reads YCVCKAVRLS…DRKRVQTVRL (63 aa). Residues 272 to 292 form a helical membrane-spanning segment; it reads TITIVACNFFLWMPFCLINVI. Over 293 to 302 the chain is Extracellular; that stretch reads QALWPEISHI. The chain crosses the membrane as a helical span at residues 303-325; the sequence is MFINYVAILGNLNSCLNPWIYIL. Over 326-398 the chain is Cytoplasmic; it reads FNRSHVRKAL…DSTSLKTNSN (73 aa).

Belongs to the G-protein coupled receptor 1 family. Vasopressin/oxytocin receptor subfamily. In terms of tissue distribution, detected in the ADL sensory neurons, the RMED and RMEV motor neurons, and the PQR tail neuron. In males, detected in SPC tail neurons involved in spicule penetration and sperm transfer, and male-specific oblique muscles involved in vulval contact.

The protein resides in the cell membrane. Not directly activated by nematocin. May modulate activity of the nematocin receptor ntr-1, leading to reduced intracellular cAMP production. Plays a role in male mating behavior. In Caenorhabditis elegans, this protein is Nematocin receptor 2.